A 181-amino-acid polypeptide reads, in one-letter code: Inner membrane-spanning protein YciB (181 aa).

The next 5 helical transmembrane spans lie at 10 to 30 (LVIF…GALI), 50 to 70 (MHLI…ILHD), 80 to 100 (IVYA…KPIL), 118 to 138 (VTWY…YVAF), and 148 to 168 (FKVF…VFYL).

The protein belongs to the YciB family.

It localises to the cell inner membrane. Plays a role in cell envelope biogenesis, maintenance of cell envelope integrity and membrane homeostasis. This chain is Inner membrane-spanning protein YciB, found in Shewanella piezotolerans (strain WP3 / JCM 13877).